The sequence spans 404 residues: S-adenosylmethionine synthase (404 aa).

His18 contacts ATP. Position 20 (Asp20) interacts with Mg(2+). Position 46 (Glu46) interacts with K(+). Positions 59 and 102 each coordinate L-methionine. The flexible loop stretch occupies residues 102–112 (QSPEIAQGVDH). ATP is bound by residues 178–180 (DGK), 249–250 (KF), Asp258, 264–265 (RK), Ala281, and Lys285. Position 258 (Asp258) interacts with L-methionine. Position 289 (Lys289) interacts with L-methionine.

It belongs to the AdoMet synthase family. As to quaternary structure, homotetramer; dimer of dimers. Mg(2+) serves as cofactor. It depends on K(+) as a cofactor.

The protein resides in the cytoplasm. It carries out the reaction L-methionine + ATP + H2O = S-adenosyl-L-methionine + phosphate + diphosphate. The protein operates within amino-acid biosynthesis; S-adenosyl-L-methionine biosynthesis; S-adenosyl-L-methionine from L-methionine: step 1/1. Functionally, catalyzes the formation of S-adenosylmethionine (AdoMet) from methionine and ATP. The overall synthetic reaction is composed of two sequential steps, AdoMet formation and the subsequent tripolyphosphate hydrolysis which occurs prior to release of AdoMet from the enzyme. This chain is S-adenosylmethionine synthase, found in Rhodococcus opacus (strain B4).